The following is a 181-amino-acid chain: Endoribonuclease YbeY (181 aa).

Positions 120, 124, and 130 each coordinate Zn(2+). Residues A157–R181 are disordered. The span at R161–E174 shows a compositional bias: gly residues.

It belongs to the endoribonuclease YbeY family. It depends on Zn(2+) as a cofactor.

It localises to the cytoplasm. In terms of biological role, single strand-specific metallo-endoribonuclease involved in late-stage 70S ribosome quality control and in maturation of the 3' terminus of the 16S rRNA. This chain is Endoribonuclease YbeY, found in Frankia alni (strain DSM 45986 / CECT 9034 / ACN14a).